We begin with the raw amino-acid sequence, 29 residues long: Cytochrome b6-f complex subunit 8 (29 aa).

A helical transmembrane segment spans residues 3–23; the sequence is IVSLAWAVLMVVFTFSLSLVV.

The protein belongs to the PetN family. As to quaternary structure, the 4 large subunits of the cytochrome b6-f complex are cytochrome b6, subunit IV (17 kDa polypeptide, PetD), cytochrome f and the Rieske protein, while the 4 small subunits are PetG, PetL, PetM and PetN. The complex functions as a dimer.

The protein localises to the plastid. Its subcellular location is the chloroplast thylakoid membrane. In terms of biological role, component of the cytochrome b6-f complex, which mediates electron transfer between photosystem II (PSII) and photosystem I (PSI), cyclic electron flow around PSI, and state transitions. The protein is Cytochrome b6-f complex subunit 8 of Drimys granadensis.